A 185-amino-acid chain; its full sequence is Ribosome-recycling factor (185 aa).

The protein belongs to the RRF family.

It localises to the cytoplasm. Responsible for the release of ribosomes from messenger RNA at the termination of protein biosynthesis. May increase the efficiency of translation by recycling ribosomes from one round of translation to another. The polypeptide is Ribosome-recycling factor (Alkaliphilus oremlandii (strain OhILAs) (Clostridium oremlandii (strain OhILAs))).